The following is a 336-amino-acid chain: D-altritol 5-dehydrogenase (336 aa).

Residues C37, H59, E60, C89, C92, C95, and C103 each coordinate Zn(2+).

Belongs to the zinc-containing alcohol dehydrogenase family. Zn(2+) serves as cofactor.

The catalysed reaction is D-altritol + NAD(+) = keto-D-tagatose + NADH + H(+). The protein operates within carbohydrate metabolism. Functionally, involved in D-altritol catabolism. Catalyzes the oxidation of D-altritol to D-tagatose. In Agrobacterium fabrum (strain C58 / ATCC 33970) (Agrobacterium tumefaciens (strain C58)), this protein is D-altritol 5-dehydrogenase.